Consider the following 106-residue polypeptide: MGKTSDRLDEQHLAEEQVKDAVRPPSMYKVILINDDYTPMEFVIDVLQKFFSYDVERATQLMLRVHYQGKAVCGIYTAEVAETKAVHVNRYARENEHPLLCTLEKA.

This sequence belongs to the ClpS family. Binds to the N-terminal domain of the chaperone ClpA.

Functionally, involved in the modulation of the specificity of the ClpAP-mediated ATP-dependent protein degradation. In Sodalis glossinidius (strain morsitans), this protein is ATP-dependent Clp protease adapter protein ClpS.